Reading from the N-terminus, the 185-residue chain is Ribosome-recycling factor (185 aa).

This sequence belongs to the RRF family.

The protein resides in the cytoplasm. Functionally, responsible for the release of ribosomes from messenger RNA at the termination of protein biosynthesis. May increase the efficiency of translation by recycling ribosomes from one round of translation to another. The chain is Ribosome-recycling factor from Oceanobacillus iheyensis (strain DSM 14371 / CIP 107618 / JCM 11309 / KCTC 3954 / HTE831).